The chain runs to 368 residues: MRGFPREVLESVWKIVDDVQSGGLKAALEYSKRLDGVAPEPHLVTPRQGGDPEVVSAALAAAKSLEALYSRISPPAAVDFYGGILRQILWKPVRRAALYVPARYISTLVMLAVPARLAGVEEVYVVTPPRGVSEELLAVAKELGVKAVLALGGPHGLAYAVFHMGVDVVAGPGGLYVQAAKYILSQYVGIDGIEGPTELVIYAEGVPPEVAVRGALAQLEHGPTSFAYLLSPDGELLKKAEELYVRERTSSMGPLKVKKVGGIDEAVSFIDEIAPEHLEVWGRREVAYRVRNVGAVSVNMPSPYLDYVAGISHVLPTGGTARWRGVITPLAFMKPIGIAEAVGELTLREAARKLAEYEGFKYHGEALR.

Thr-197, Gln-218, and His-221 together coordinate substrate. The Zn(2+) site is built by Gln-218 and His-221. Active-site proton acceptor residues include Glu-276 and His-277. Substrate is bound by residues His-277, Asp-306, Glu-358, and His-363. Residue Asp-306 participates in Zn(2+) binding. Zn(2+) is bound at residue His-363.

This sequence belongs to the histidinol dehydrogenase family. Zn(2+) is required as a cofactor.

The catalysed reaction is L-histidinol + 2 NAD(+) + H2O = L-histidine + 2 NADH + 3 H(+). Its pathway is amino-acid biosynthesis; L-histidine biosynthesis; L-histidine from 5-phospho-alpha-D-ribose 1-diphosphate: step 9/9. Its function is as follows. Catalyzes the sequential NAD-dependent oxidations of L-histidinol to L-histidinaldehyde and then to L-histidine. In Pyrobaculum aerophilum (strain ATCC 51768 / DSM 7523 / JCM 9630 / CIP 104966 / NBRC 100827 / IM2), this protein is Histidinol dehydrogenase.